The primary structure comprises 406 residues: Serine/threonine transporter SstT (406 aa).

9 helical membrane-spanning segments follow: residues 15 to 35 (LVLQ…VSPS), 47 to 67 (FVGA…AASI), 81 to 101 (IIAM…VLSF), 140 to 160 (ALMS…GLAL), 191 to 211 (FGIF…ALAG), 215 to 235 (LLVV…PAMV), 289 to 309 (IPLG…TLTL), 315 to 335 (MGIE…AVSA), and 362 to 382 (IAMQ…SAET).

It belongs to the dicarboxylate/amino acid:cation symporter (DAACS) (TC 2.A.23) family.

It localises to the cell inner membrane. It carries out the reaction L-serine(in) + Na(+)(in) = L-serine(out) + Na(+)(out). It catalyses the reaction L-threonine(in) + Na(+)(in) = L-threonine(out) + Na(+)(out). Its function is as follows. Involved in the import of serine and threonine into the cell, with the concomitant import of sodium (symport system). The sequence is that of Serine/threonine transporter SstT from Vibrio vulnificus (strain CMCP6).